Reading from the N-terminus, the 2057-residue chain is Myosin heavy chain, non-muscle (2057 aa).

The 51-residue stretch at 78–128 (HRSVLVWVPHENQGFVAASIKREHGDEVEVELAETGKRVMILRDDIQKMNP) folds into the Myosin N-terminal SH3-like domain. The 736-residue stretch at 132–867 (DKVEDMAELT…VLAHLEEERD (736 aa)) folds into the Myosin motor domain. An ATP-binding site is contributed by 225–232 (GESGAGKT). Residues 250–260 (PKGSGAVPHPA) form a 25 kDa/50 kDa junction region. A 50 kDa/20 kDa junction region spans residues 722–734 (DTQFGARTRKGMF). The actin-binding stretch occupies residues 745–767 (LAKLMDTLRNTNPNFVRCIIPNH). Residues 782 to 798 (QLRCNGVLEGIRICRQG) form a reactive sulfhydryl/actin-binding region. The 30-residue stretch at 870 to 899 (ISDLIVNFQAFCRGFLARRNYQKRLQQLNA) folds into the IQ domain. Positions 926–2016 (KPLLEVTKQE…SLKTKLRRTG (1091 aa)) form a coiled coil. Disordered stretches follow at residues 1124-1144 (EERL…KRKI), 1782-1802 (SSER…EEIA), and 2008-2057 (LKTK…DSAN). The alpha-helical tailpiece (LMM) stretch occupies residues 1343–2010 (SQIAELQVKL…MNREINSLKT (668 aa)). A light meromyosin (LMM) region spans residues 1343–2057 (SQIAELQVKL…ESLDGEDSAN (715 aa)). Basic and acidic residues predominate over residues 1782–1792 (SSERARRAAET). Residues 2011 to 2057 (KLRRTGGIGLSSSRLTGTPSSKRAGGGGGSDDSSVQDESLDGEDSAN) form a globular tailpiece region. Phosphoserine occurs at positions 2021 and 2022. The segment covering 2044–2057 (SVQDESLDGEDSAN) has biased composition (acidic residues).

This sequence belongs to the TRAFAC class myosin-kinesin ATPase superfamily. Myosin family. In terms of assembly, interacts with sau. Interacts with ck and Ubr3. Ubiquitinated. In terms of tissue distribution, in Johnston's organ, expressed in neurons and scolopale cells.

It localises to the cell projection. The protein resides in the cilium. The protein localises to the cytoplasm. Functionally, nonmuscle myosin appears to be responsible for cellularization. Required for morphogenesis and cytokinesis. Necessary for auditory transduction: plays a role in Johnston's organ organization by acting in scolopidial apical attachment. Interaction with the myosin ck may be important for this function. Localizes to and defines the trailing edge of cells during larval epidermal wound healing. This process is dependent on the phosphatidylinositol 4-phosphate 5-kinase sktl/skittles. This Drosophila melanogaster (Fruit fly) protein is Myosin heavy chain, non-muscle (zip).